We begin with the raw amino-acid sequence, 404 residues long: Cytochrome b561 and DOMON domain-containing protein At5g35735 (404 aa).

Positions 1–25 (MDRTQSPKTALFAVLATLLVLTVNG) are cleaved as a signal peptide. Residues 49–164 (LGSFLHWTYN…ITANQLWQVG (116 aa)) enclose the DOMON domain. The region spanning 170–369 (VPASHQTSGD…LEPLTWFIVL (200 aa)) is the Cytochrome b561 domain. Residues 172-207 (ASHQTSGDNMRSSGRIDFRTGQASAGGGGSGDRLRK) form a disordered region. Residues 173-183 (SHQTSGDNMRS) show a composition bias toward polar residues. 2 helical membrane passes run 210–230 (THGV…AMMA) and 241–261 (WFYL…AGWA). The heme b site is built by His211, His245, and His278. A helical membrane pass occupies residues 280–300 (NLGIALFTFATLQVFALLVRP). His314 is a heme b binding site. A run of 2 helical transmembrane segments spans residues 316–336 (TVGY…FDIL) and 349–369 (ILIF…FIVL). Residues 376 to 404 (GNTVAAPTSSKYSNGVNGTTTTGPHHQDA) form a disordered region. The span at 380-404 (AAPTSSKYSNGVNGTTTTGPHHQDA) shows a compositional bias: polar residues.

Heme b is required as a cofactor.

It is found in the membrane. In terms of biological role, may act as a catecholamine-responsive trans-membrane electron transporter. This is Cytochrome b561 and DOMON domain-containing protein At5g35735 from Arabidopsis thaliana (Mouse-ear cress).